Reading from the N-terminus, the 392-residue chain is HORMA domain-containing protein 1 (392 aa).

One can recognise an HORMA domain in the interval 25-227; the sequence is QQSLMFVKRL…TPFHTFRLKV (203 aa). Disordered stretches follow at residues 271 to 292 and 371 to 392; these read IKTK…EPNL and LESS…NEHT. Serine 374 carries the phosphoserine modification. Positions 381–384 match the Nuclear localization signal motif; it reads KRRR.

In terms of assembly, interacts with HORMAD2. Interacts with IHO1. In terms of processing, phosphorylated at Ser-375 in a SPO11-dependent manner.

It localises to the nucleus. It is found in the chromosome. In terms of biological role, plays a key role in meiotic progression. Regulates 3 different functions during meiosis: ensures that sufficient numbers of processed DNA double-strand breaks (DSBs) are available for successful homology search by increasing the steady-state numbers of single-stranded DSB ends. Promotes synaptonemal-complex formation independently of its role in homology search. Plays a key role in the male mid-pachytene checkpoint and the female meiotic prophase checkpoint: required for efficient build-up of ATR activity on unsynapsed chromosome regions, a process believed to form the basis of meiotic silencing of unsynapsed chromatin (MSUC) and meiotic prophase quality control in both sexes. The protein is HORMA domain-containing protein 1 (Hormad1) of Rattus norvegicus (Rat).